Consider the following 222-residue polypeptide: Octanoyltransferase (222 aa).

The BPL/LPL catalytic domain occupies 34-214 (GEKNSTVLIL…EFSKHDEALV (181 aa)). Substrate is bound by residues 72-79 (RGGKLTWH), 144-146 (AIG), and 157-159 (GVA). The active-site Acyl-thioester intermediate is Cys-175.

Belongs to the LipB family.

The protein localises to the cytoplasm. The enzyme catalyses octanoyl-[ACP] + L-lysyl-[protein] = N(6)-octanoyl-L-lysyl-[protein] + holo-[ACP] + H(+). It functions in the pathway protein modification; protein lipoylation via endogenous pathway; protein N(6)-(lipoyl)lysine from octanoyl-[acyl-carrier-protein]: step 1/2. Functionally, catalyzes the transfer of endogenously produced octanoic acid from octanoyl-acyl-carrier-protein onto the lipoyl domains of lipoate-dependent enzymes. Lipoyl-ACP can also act as a substrate although octanoyl-ACP is likely to be the physiological substrate. This Paenarthrobacter aurescens (strain TC1) protein is Octanoyltransferase.